Reading from the N-terminus, the 94-residue chain is Pyrimidine/purine nucleoside phosphorylase (94 aa).

Belongs to the nucleoside phosphorylase PpnP family.

The enzyme catalyses a purine D-ribonucleoside + phosphate = a purine nucleobase + alpha-D-ribose 1-phosphate. It catalyses the reaction adenosine + phosphate = alpha-D-ribose 1-phosphate + adenine. The catalysed reaction is cytidine + phosphate = cytosine + alpha-D-ribose 1-phosphate. It carries out the reaction guanosine + phosphate = alpha-D-ribose 1-phosphate + guanine. The enzyme catalyses inosine + phosphate = alpha-D-ribose 1-phosphate + hypoxanthine. It catalyses the reaction thymidine + phosphate = 2-deoxy-alpha-D-ribose 1-phosphate + thymine. The catalysed reaction is uridine + phosphate = alpha-D-ribose 1-phosphate + uracil. It carries out the reaction xanthosine + phosphate = alpha-D-ribose 1-phosphate + xanthine. Catalyzes the phosphorolysis of diverse nucleosides, yielding D-ribose 1-phosphate and the respective free bases. Can use uridine, adenosine, guanosine, cytidine, thymidine, inosine and xanthosine as substrates. Also catalyzes the reverse reactions. The polypeptide is Pyrimidine/purine nucleoside phosphorylase (Pectobacterium carotovorum subsp. carotovorum (strain PC1)).